The sequence spans 206 residues: MSSSLSQTSKYQATSVVNGLLSNLLPGVPKIRANNGKTSVNNGSTAQLIDRNLKKRVQLQNRDVHKIKKKCKLVKKKQVKKHKLDKEQLEQLAKHQVLKKHQQEGTLTDHERKYLNKLIKRNSQNLRSWDLEEEVRDELEDIQQSILKDTVSTANTDRSKRRRFKRKQFKEDIKESDFVKDHRYPGLTPGLAPVGLSDEEDSSEED.

Residues 178–206 (FVKDHRYPGLTPGLAPVGLSDEEDSSEED) are disordered. Residues Ser-197, Ser-202, and Ser-203 each carry the phosphoserine modification. The span at 197 to 206 (SDEEDSSEED) shows a compositional bias: acidic residues.

The protein belongs to the RRT14 family.

The protein localises to the nucleus. It is found in the nucleolus. Involved in ribosome biogenesis, probably through modulation of rDNA transcription. The protein is Regulator of rDNA transcription 14 (RRT14) of Saccharomyces cerevisiae (strain JAY291) (Baker's yeast).